The chain runs to 186 residues: Zinc finger AN1 domain-containing stress-associated protein 12 (186 aa).

2 consecutive AN1-type zinc fingers follow at residues 10–58 and 97–147; these read PDLG…HGSR and KKKK…INTA. Residues C16, C21, C31, C34, C39, H42, H48, C50, C103, C108, C120, C123, C128, H131, H137, and C139 each coordinate Zn(2+). Residues 167-186 are disordered; sequence KGCGRGSSVSSKSSPSVRSF. Over residues 172–186 the composition is skewed to low complexity; the sequence is GSSVSSKSSPSVRSF.

Functionally, may be involved in environmental stress response. The sequence is that of Zinc finger AN1 domain-containing stress-associated protein 12 (SAP12) from Arabidopsis thaliana (Mouse-ear cress).